The primary structure comprises 245 residues: Pyridoxine 5'-phosphate synthase (245 aa).

Asparagine 9 contacts 3-amino-2-oxopropyl phosphate. 11-12 is a binding site for 1-deoxy-D-xylulose 5-phosphate; the sequence is DH. Arginine 20 serves as a coordination point for 3-amino-2-oxopropyl phosphate. Histidine 45 serves as the catalytic Proton acceptor. Arginine 47 and histidine 52 together coordinate 1-deoxy-D-xylulose 5-phosphate. Glutamate 72 functions as the Proton acceptor in the catalytic mechanism. Residue threonine 102 participates in 1-deoxy-D-xylulose 5-phosphate binding. The active-site Proton donor is the histidine 193. 3-amino-2-oxopropyl phosphate-binding positions include glycine 194 and 215 to 216; that span reads GH.

Belongs to the PNP synthase family. As to quaternary structure, homooctamer; tetramer of dimers.

It is found in the cytoplasm. The enzyme catalyses 3-amino-2-oxopropyl phosphate + 1-deoxy-D-xylulose 5-phosphate = pyridoxine 5'-phosphate + phosphate + 2 H2O + H(+). It participates in cofactor biosynthesis; pyridoxine 5'-phosphate biosynthesis; pyridoxine 5'-phosphate from D-erythrose 4-phosphate: step 5/5. Catalyzes the complicated ring closure reaction between the two acyclic compounds 1-deoxy-D-xylulose-5-phosphate (DXP) and 3-amino-2-oxopropyl phosphate (1-amino-acetone-3-phosphate or AAP) to form pyridoxine 5'-phosphate (PNP) and inorganic phosphate. The sequence is that of Pyridoxine 5'-phosphate synthase from Shewanella oneidensis (strain ATCC 700550 / JCM 31522 / CIP 106686 / LMG 19005 / NCIMB 14063 / MR-1).